A 351-amino-acid chain; its full sequence is Homeobox protein rough sheath 1 (351 aa).

Disordered stretches follow at residues 1–23, 57–82, and 187–229; these read MDQSFGNLGAGAGSSSGGSNSKA, AAAPSSSQQHQQQQHHHHYARHGAEM, and GGGS…PRAE. Over residues 57–68 the composition is skewed to low complexity; sequence AAAPSSSQQHQQ. Positions 214 to 229 are enriched in basic and acidic residues; it reads PNGRENDPPEIDPRAE. One can recognise an ELK domain in the interval 232–252; the sequence is ELKYQLLKKYSGYLSSLRQEF. A DNA-binding region (homeobox; TALE-type) is located at residues 253–316; it reads SKKKKKGKLP…NQRKRHWKPS (64 aa).

Belongs to the TALE/KNOX homeobox family.

The protein resides in the nucleus. Plays a possible role in patterning the placement of lateral organs along the axis of the shoot. Mutations in RS1 alters cell fate and causes unregulated cell division and expansion in the leaf. Probably binds to the DNA sequence 5'-TGAC-3'. The polypeptide is Homeobox protein rough sheath 1 (RS1) (Zea mays (Maize)).